The chain runs to 116 residues: UPF0102 protein ELI_05985 (116 aa).

This sequence belongs to the UPF0102 family.

This is UPF0102 protein ELI_05985 from Erythrobacter litoralis (strain HTCC2594).